We begin with the raw amino-acid sequence, 158 residues long: MILSDRDIKTYINSKKLVINPLSEDTIRENGVDLKIGNEIVRIKENMEKEVGDEFIIYPNEHVLLTTKEYIKLSNDIIAFCNLRSTFARKGLLIPPTIVDAGFEGQLTIELVGSSIPVKLKSGERFLHLIFARTLTPVEKPYNGKYQKQKGVTLAKED.

This sequence belongs to the dUTPase family. Requires Mg(2+) as cofactor.

It catalyses the reaction dUTP + H2O = dUMP + diphosphate + H(+). The protein operates within pyrimidine metabolism; dUMP biosynthesis; dUMP from dCTP (dUTP route): step 1/2. Its function is as follows. This enzyme is involved in nucleotide metabolism: it produces dUMP, the immediate precursor of thymidine nucleotides and it decreases the intracellular concentration of dUTP so that uracil cannot be incorporated into DNA. It does probably not deaminate dCTP. The chain is Probable deoxyuridine 5'-triphosphate nucleotidohydrolase from Sulfolobus islandicus rod-shaped virus 1 (SIRV-1).